The sequence spans 282 residues: Bifunctional protein FolD (282 aa).

NADP(+) is bound by residues Asn-165–Ser-167, Ser-190, and Ile-231.

The protein belongs to the tetrahydrofolate dehydrogenase/cyclohydrolase family. Homodimer.

The enzyme catalyses (6R)-5,10-methylene-5,6,7,8-tetrahydrofolate + NADP(+) = (6R)-5,10-methenyltetrahydrofolate + NADPH. It catalyses the reaction (6R)-5,10-methenyltetrahydrofolate + H2O = (6R)-10-formyltetrahydrofolate + H(+). The protein operates within one-carbon metabolism; tetrahydrofolate interconversion. Functionally, catalyzes the oxidation of 5,10-methylenetetrahydrofolate to 5,10-methenyltetrahydrofolate and then the hydrolysis of 5,10-methenyltetrahydrofolate to 10-formyltetrahydrofolate. The chain is Bifunctional protein FolD from Clostridium botulinum (strain Okra / Type B1).